A 422-amino-acid polypeptide reads, in one-letter code: RNA exonuclease 4 (422 aa).

The disordered stretch occupies residues 1-194 (MGKAKVPASK…APAPPTEEDI (194 aa)). Position 15 is a phosphoserine (serine 15). Basic residues predominate over residues 26–40 (LTRKKNKKKKRFWKS). Serine 96 and serine 111 each carry phosphoserine. 2 stretches are compositionally biased toward basic and acidic residues: residues 106 to 127 (NKKE…DQEA) and 151 to 176 (GTEH…DIEH). Residue lysine 115 forms a Glycyl lysine isopeptide (Lys-Gly) (interchain with G-Cter in SUMO2) linkage. The 152-residue stretch at 243 to 394 (ALALDCEMVG…QDAQAAMRLY (152 aa)) folds into the Exonuclease domain.

It belongs to the REXO4 family. As to quaternary structure, can bind ESR1 and ESR2. This interaction is abrogated by estrogen and augmented by tamoxifen treatment.

The protein resides in the nucleus. It is found in the nucleolus. This is RNA exonuclease 4 (REXO4) from Homo sapiens (Human).